Consider the following 270-residue polypeptide: 4-hydroxy-tetrahydrodipicolinate reductase (270 aa).

NAD(+) is bound by residues 11 to 16 (GAGGRM) and E37. R38 contributes to the NADP(+) binding site. NAD(+) is bound by residues 101 to 103 (GTT) and 125 to 128 (APNM). H158 serves as the catalytic Proton donor/acceptor. H159 serves as a coordination point for (S)-2,3,4,5-tetrahydrodipicolinate. K162 functions as the Proton donor in the catalytic mechanism. 168 to 169 (GT) contributes to the (S)-2,3,4,5-tetrahydrodipicolinate binding site.

This sequence belongs to the DapB family.

The protein localises to the cytoplasm. The enzyme catalyses (S)-2,3,4,5-tetrahydrodipicolinate + NAD(+) + H2O = (2S,4S)-4-hydroxy-2,3,4,5-tetrahydrodipicolinate + NADH + H(+). The catalysed reaction is (S)-2,3,4,5-tetrahydrodipicolinate + NADP(+) + H2O = (2S,4S)-4-hydroxy-2,3,4,5-tetrahydrodipicolinate + NADPH + H(+). Its pathway is amino-acid biosynthesis; L-lysine biosynthesis via DAP pathway; (S)-tetrahydrodipicolinate from L-aspartate: step 4/4. Functionally, catalyzes the conversion of 4-hydroxy-tetrahydrodipicolinate (HTPA) to tetrahydrodipicolinate. The chain is 4-hydroxy-tetrahydrodipicolinate reductase from Shewanella sp. (strain W3-18-1).